We begin with the raw amino-acid sequence, 503 residues long: NAD(P)H-quinone oxidoreductase chain 4, chloroplastic (503 aa).

13 helical membrane passes run 4-24 (FPWLTIIVVFPISAGSSIFFL), 37-57 (ICICLLELLLTTYAFCYHFQL), 87-107 (IGPTLLTGFITTLATLAAWPV), 134-154 (LLLFFIMWELELIPVYLLLSM), 167-187 (FILYTAGGSIFLLMGVPGMGL), 208-228 (ALEIIFYFGFFIAYAVKSPII), 242-262 (HYSTCMLLAGILLKMGAYGLV), 272-292 (AHSIFSPWLMIVGTIQIIYAA), 305-325 (IAYSSVSHMGFTIIGIASITD), 330-350 (GAILQIISHGFIGAALFFLAG), 386-406 (LALPGMSGFFAELVVFFGIIT), 416-436 (ILITFVMAIGMILTPIYSLSM), and 462-482 (LFVSICIFLPVIGIGIYPDFV).

The protein belongs to the complex I subunit 4 family.

The protein localises to the plastid. It localises to the chloroplast thylakoid membrane. It carries out the reaction a plastoquinone + NADH + (n+1) H(+)(in) = a plastoquinol + NAD(+) + n H(+)(out). The catalysed reaction is a plastoquinone + NADPH + (n+1) H(+)(in) = a plastoquinol + NADP(+) + n H(+)(out). The protein is NAD(P)H-quinone oxidoreductase chain 4, chloroplastic of Drimys granadensis.